The primary structure comprises 427 residues: Acetyl-CoA acetyltransferase, mitochondrial (427 aa).

The N-terminal 33 residues, 1–33 (MAVLAALLRSGARSRSPLLRRLVQEIRYVERSY), are a transit peptide targeting the mitochondrion. Residue Lys66 is modified to N6-acetyllysine; alternate. Lys66 carries the post-translational modification N6-succinyllysine; alternate. Lys78 carries the post-translational modification N6-succinyllysine. Cys126 functions as the Acyl-thioester intermediate in the catalytic mechanism. N6-acetyllysine; alternate occurs at positions 174, 181, 190, and 202. N6-succinyllysine; alternate occurs at positions 174, 181, 190, and 202. Tyr219 serves as a coordination point for CoA. Tyr219 is a binding site for K(+). N6-acetyllysine; alternate is present on residues Lys223 and Lys230. N6-succinyllysine; alternate is present on residues Lys223 and Lys230. Residue Lys243 is modified to N6-succinyllysine. N6-acetyllysine is present on residues Lys251 and Lys257. CoA is bound by residues 258–260 (RVD) and Lys263. At Lys263 the chain carries N6-acetyllysine; alternate. Lys263 is modified (N6-succinyllysine; alternate). N6-succinyllysine is present on residues Lys266 and Lys268. Lys273 is modified (N6-acetyllysine). Residues Ala280, Ala281, and Ala283 each coordinate K(+). Residue Ser284 participates in CoA binding. Lys338 bears the N6-acetyllysine mark. Residue Val381 participates in K(+) binding. The active-site Proton donor/acceptor is Cys413.

The protein belongs to the thiolase-like superfamily. Thiolase family. In terms of assembly, homotetramer. Post-translationally, succinylation at Lys-268, adjacent to a coenzyme A binding site. Desuccinylated by SIRT5.

It is found in the mitochondrion. It catalyses the reaction 2 acetyl-CoA = acetoacetyl-CoA + CoA. The catalysed reaction is propanoyl-CoA + acetyl-CoA = 2-methyl-3-oxobutanoyl-CoA + CoA. It participates in lipid metabolism; fatty acid beta-oxidation. With respect to regulation, activated by potassium ions, but not sodium ions. Functionally, this is one of the enzymes that catalyzes the last step of the mitochondrial beta-oxidation pathway, an aerobic process breaking down fatty acids into acetyl-CoA. Using free coenzyme A/CoA, catalyzes the thiolytic cleavage of medium- to long-chain 3-oxoacyl-CoAs into acetyl-CoA and a fatty acyl-CoA shortened by two carbon atoms. The activity of the enzyme is reversible and it can also catalyze the condensation of two acetyl-CoA molecules into acetoacetyl-CoA. Thereby, it plays a major role in ketone body metabolism. This chain is Acetyl-CoA acetyltransferase, mitochondrial (ACAT1), found in Homo sapiens (Human).